The primary structure comprises 184 residues: Fruit protein pKIWI501 (184 aa).

The segment at 1–184 is disordered; sequence MATVEVTPAV…TEVPVDKTEE (184 aa). Low complexity-rich tracts occupy residues 25-36 and 53-65; these read PQEPQPEAAVAA and PEAV…PAAT. Residues 72–92 show a composition bias toward acidic residues; the sequence is EVAEAEEEVVEEPQEVPEEPV. Residues 96–119 show a composition bias toward basic and acidic residues; that stretch reads AAKEVEATEGKAEPTGEMKDKTPE. Residues 120–156 show a composition bias toward low complexity; the sequence is ATDAPEAPAAAEEPTDAPEAPAVAEEPTNAPEAPAVG. Positions 159–168 are enriched in basic and acidic residues; that stretch reads PEAKEGKPDE.

This sequence to H.brasiliensis latex allergen Hev b 5.

This chain is Fruit protein pKIWI501, found in Actinidia deliciosa (Kiwi).